The following is a 62-amino-acid chain: Potassium channel toxin kappa-KTx 1.4 (62 aa).

An N-terminal signal peptide occupies residues 1–26 (MKSCLINVSLLILLLLPILGYASVNA). Residues 27 to 38 (ESIDGENDFEEE) constitute a propeptide that is removed on maturation. 2 disulfide bridges follow: Cys-43-Cys-61 and Cys-47-Cys-57.

It belongs to the short scorpion toxin superfamily. Potassium channel inhibitor kappa-KTx family. Kappa-KTx 1 subfamily. As to expression, expressed by the venom gland.

Its subcellular location is the secreted. In terms of biological role, shows structural homology with WaTx suggesting that it acts as a cell-penetrating peptide (CPP) with defensive purpose that induces pain by specifically activating mammalian sensory neuron TRPA1 channels. Has no effect on the voltage-gated potassium channels tested. The chain is Potassium channel toxin kappa-KTx 1.4 from Heterometrus petersii (Asian forest scorpion).